The primary structure comprises 394 residues: Protein-glutamate methylesterase/protein-glutamine glutaminase of group 2 operon (394 aa).

One can recognise a Response regulatory domain in the interval 21-139 (RVMVVDDSAV…ELTGADTFKR (119 aa)). Residue D72 is modified to 4-aspartylphosphate. A disordered region spans residues 148 to 201 (LGAAARRSGPRREGTAAARPPGAAAQPTSGYTLPSPVRAKPETGPLTVRPLPPD). The span at 162 to 172 (TAAARPPGAAA) shows a compositional bias: low complexity. The 183-residue stretch at 200–382 (PDGRPDVIAI…SAILPLKEIG (183 aa)) folds into the CheB-type methylesterase domain. Catalysis depends on residues S212, H238, and D334.

This sequence belongs to the CheB family. In terms of processing, phosphorylated by CheA. Phosphorylation of the N-terminal regulatory domain activates the methylesterase activity.

It is found in the cytoplasm. It carries out the reaction [protein]-L-glutamate 5-O-methyl ester + H2O = L-glutamyl-[protein] + methanol + H(+). It catalyses the reaction L-glutaminyl-[protein] + H2O = L-glutamyl-[protein] + NH4(+). Its function is as follows. Involved in chemotaxis. Part of a chemotaxis signal transduction system that modulates chemotaxis in response to various stimuli. Catalyzes the demethylation of specific methylglutamate residues introduced into the chemoreceptors (methyl-accepting chemotaxis proteins or MCP) by CheR. Also mediates the irreversible deamidation of specific glutamine residues to glutamic acid. This chain is Protein-glutamate methylesterase/protein-glutamine glutaminase of group 2 operon, found in Rhodospirillum centenum (strain ATCC 51521 / SW).